The primary structure comprises 953 residues: Zinc finger CCCH domain-containing protein 18 (953 aa).

Residue Met1 is modified to N-acetylmethionine. Residues Met1–Pro14 are compositionally biased toward basic and acidic residues. Disordered stretches follow at residues Met1–Pro222 and Gln391–Arg928. Phosphoserine is present on Ser6. Acidic residues predominate over residues Glu15–Asp26. Ser34, Ser46, Ser53, Ser59, Ser67, Ser74, Ser78, Ser83, and Ser95 each carry phosphoserine. The segment covering Gln60–Arg72 has biased composition (acidic residues). Acidic residues predominate over residues Cys97–Glu106. Positions Glu105–Val134 form a coiled coil. The span at Asp107 to Asp124 shows a compositional bias: basic and acidic residues. The residue at position 109 (Thr109) is a Phosphothreonine. 2 positions are modified to phosphoserine: Ser110 and Ser118. 2 stretches are compositionally biased toward acidic residues: residues Glu125–Glu136 and Gln143–Lys158. The segment covering Gly159–Lys168 has biased composition (basic and acidic residues). A Phosphothreonine modification is found at Thr162. Phosphoserine occurs at positions 173 and 179. The segment covering Gly175 to Asp190 has biased composition (basic and acidic residues). Over residues Asp191–Glu207 the composition is skewed to acidic residues. Over residues Gly208–Lys217 the composition is skewed to basic and acidic residues. The C3H1-type zinc-finger motif lies at Arg219–Val245. The segment covering Glu396–Lys482 has biased composition (basic and acidic residues). Residues His399–Asp464 are a coiled coil. Ser487 carries the phosphoserine modification. Residue Lys510 forms a Glycyl lysine isopeptide (Lys-Gly) (interchain with G-Cter in SUMO2) linkage. The segment covering Lys510–Arg520 has biased composition (basic and acidic residues). Residues Ser532, Ser534, and Ser536 each carry the phosphoserine modification. Over residues Ser545–Pro606 the composition is skewed to low complexity. Glycyl lysine isopeptide (Lys-Gly) (interchain with G-Cter in SUMO2) cross-links involve residues Lys622 and Lys661. Positions Lys661–Arg670 are enriched in basic and acidic residues. Composition is skewed to low complexity over residues Gly692–Ser725 and Ala736–Ala750. Residues Lys760–Ser774 show a composition bias toward basic and acidic residues. A Glycyl lysine isopeptide (Lys-Gly) (interchain with G-Cter in SUMO2) cross-link involves residue Lys766. Over residues Pro778–Gln798 the composition is skewed to low complexity. Residue Lys814 is modified to N6-acetyllysine. A Glycyl lysine isopeptide (Lys-Gly) (interchain with G-Cter in SUMO2) cross-link involves residue Lys817. The span at Ala824–Gln841 shows a compositional bias: basic and acidic residues. A phosphoserine mark is found at Ser842, Ser852, Ser868, Ser893, and Ser896. Over residues Ser893–Pro906 the composition is skewed to low complexity. Residue Lys908 forms a Glycyl lysine isopeptide (Lys-Gly) (interchain with G-Cter in SUMO2) linkage. Residues Ser916 to Leu925 are compositionally biased toward polar residues. Residues Lys921–Pro950 adopt a coiled-coil conformation.

In terms of assembly, interacts with ZFC3H1 in a RNase-insensitive manner.

It localises to the nucleus. The polypeptide is Zinc finger CCCH domain-containing protein 18 (Homo sapiens (Human)).